Reading from the N-terminus, the 678-residue chain is Protein MALE DISCOVERER 2 (678 aa).

The first 25 residues, 1-25 (MMGCGFHFPWFFFLIIGLQAPLSLS), serve as a signal peptide directing secretion. Residues 26-323 (LTSQGSALLK…SKGSKHVWLY (298 aa)) are Extracellular-facing. A glycan (N-linked (GlcNAc...) asparagine) is linked at Asn52. 4 LRR repeats span residues 71 to 94 (KVQI…SQLS), 95 to 117 (DLRS…YGSF), 119 to 141 (NLEV…LSNG), and 143 to 164 (SLKH…KIVR). Residues 247–314 (LAAEPAPSAP…KNQPQDNKQS (68 aa)) are disordered. Residues 296–311 (KGSTSPDISKNQPQDN) show a composition bias toward polar residues. The chain crosses the membrane as a helical span at residues 324 to 344 (VVIAVASFVGLLIIVAVIFFC). Over 345–678 (RKRAVKSIGP…ELEILSSEAT (334 aa)) the chain is Cytoplasmic. Residues 346–651 (KRAVKSIGPW…DVAEQLKQVI (306 aa)) form the Protein kinase domain.

Belongs to the protein kinase superfamily. Ser/Thr protein kinase family. As to expression, expressed in pollen tubes and seedlings.

The protein localises to the endomembrane system. The enzyme catalyses L-seryl-[protein] + ATP = O-phospho-L-seryl-[protein] + ADP + H(+). The catalysed reaction is L-threonyl-[protein] + ATP = O-phospho-L-threonyl-[protein] + ADP + H(+). In terms of biological role, involved in the pollen tube perception of the female signal by binding an unidentified female attractant. May be involved in the regulation of root hairs development. In Arabidopsis thaliana (Mouse-ear cress), this protein is Protein MALE DISCOVERER 2 (MDIS2).